The primary structure comprises 270 residues: NAD(P)H-hydrate epimerase (270 aa).

The region spanning 25 to 234 is the YjeF N-terminal domain; that stretch reads FQQLMDLMQN…DLLAPEAIYQ (210 aa). 73–77 serves as a coordination point for (6S)-NADPHX; sequence DNGGQ. The K(+) site is built by asparagine 74 and aspartate 144. Residues 148 to 154 and glutamate 177 contribute to the (6S)-NADPHX site; that span reads GVGLYGH. Threonine 180 lines the K(+) pocket.

The protein belongs to the NnrE/AIBP family. K(+) serves as cofactor.

It catalyses the reaction (6R)-NADHX = (6S)-NADHX. The enzyme catalyses (6R)-NADPHX = (6S)-NADPHX. Functionally, catalyzes the epimerization of the S- and R-forms of NAD(P)HX, a damaged form of NAD(P)H that is a result of enzymatic or heat-dependent hydration. This is a prerequisite for the S-specific NAD(P)H-hydrate dehydratase to allow the repair of both epimers of NAD(P)HX. The chain is NAD(P)H-hydrate epimerase from Legionella pneumophila serogroup 1 (strain 2300/99 Alcoy).